Reading from the N-terminus, the 302-residue chain is MSKKVLVFGGTGYQGGSVVRELLKDDSFKVITLSRNPESEKCKELKKLGADVIKCDESQPKEEIEKVMKGCDCVYLVTNSQGYCEKEIEYGIKVADVALKCGVKHFIFSTVPGPNKLSNGKFKSPDLDNKVEIEQHIRQLSKSNPEFISSFVIAPWYFQNFINYYQPEKESSTSDKYILKWACDPKVSLDYGDIDELGLLVREIFKNPIKFSGETVPFSSEILTPIQIVEIISKVTNKKVSYQFIDPVEYGKSYDLEVSLMLAFFNEYGGFNIYGGDRSIAHNIKKLTSFEEYLKKINYKLD.

NADP(+) is bound by residues 9–14, 35–39, 56–57, 78–80, Lys130, and 157–160; these read GGTGYQ, RNPES, DE, TNS, and YFQN.

The protein belongs to the NmrA-type oxidoreductase family.

In terms of biological role, may be a redox sensor protein. The protein is NmrA-like family domain-containing protein DDB_G0286605 of Dictyostelium discoideum (Social amoeba).